We begin with the raw amino-acid sequence, 504 residues long: Probable protein phosphatase 2C 18 (504 aa).

Residues 1–49 are disordered; that stretch reads MGLCYSVDRTTGKEPGEASSTATTAETVEERSGSGRWRRPRDLKGGGDI. The segment covering 17–26 has biased composition (low complexity); the sequence is EASSTATTAE. Residues 67 to 399 form the PPM-type phosphatase domain; sequence IACLYTQQGK…DDCTVVCLFL (333 aa). Residues Asp-103, Gly-104, Asp-344, and Asp-390 each coordinate Mn(2+). Positions 410-435 are disordered; it reads TNVKKDSPKEESIESVTNSTSKEEDE. Residues 412–421 are compositionally biased toward basic and acidic residues; sequence VKKDSPKEES.

It belongs to the PP2C family. The cofactor is Mg(2+). It depends on Mn(2+) as a cofactor.

It carries out the reaction O-phospho-L-seryl-[protein] + H2O = L-seryl-[protein] + phosphate. The enzyme catalyses O-phospho-L-threonyl-[protein] + H2O = L-threonyl-[protein] + phosphate. This Arabidopsis thaliana (Mouse-ear cress) protein is Probable protein phosphatase 2C 18.